Consider the following 148-residue polypeptide: UPF0756 membrane protein YeaL (148 aa).

A run of 4 helical transmembrane segments spans residues 14 to 34 (ALGFISHNTTVAVSILVLIIV), 51 to 71 (LTVGIIILTIGVMAPIASGTL), 86 to 106 (LVAIAVGVFVSWLGGRGVALM), and 121 to 141 (VLGVALFRGVPVGPLIAAGLV).

The protein belongs to the UPF0756 family.

The protein resides in the cell membrane. This is UPF0756 membrane protein YeaL from Salmonella arizonae (strain ATCC BAA-731 / CDC346-86 / RSK2980).